Reading from the N-terminus, the 234-residue chain is ATP synthase subunit a 2 (234 aa).

5 helical membrane passes run 20–40 (ATLIFTWLVMGVLVVGSWFVT), 78–98 (YLPFIGTLFIFIALSNLLSVI), 107–127 (SLSTTTALALCVFFAVPLYGV), 169–189 (VMSGTMIVGILLSVAPLFFPV), and 194–214 (LGLLTGVIQAYIFAILAMVFI).

Belongs to the ATPase A chain family. F-type ATPases have 2 components, CF(1) - the catalytic core - and CF(0) - the membrane proton channel. CF(1) has five subunits: alpha(3), beta(3), gamma(1), delta(1), epsilon(1). CF(0) has four main subunits: a, b, b' and c.

The protein localises to the cellular thylakoid membrane. Key component of the proton channel; it plays a direct role in the translocation of protons across the membrane. The sequence is that of ATP synthase subunit a 2 from Acaryochloris marina (strain MBIC 11017).